Here is a 1179-residue protein sequence, read N- to C-terminus: Integrin alpha-E (1179 aa).

Positions 1–18 (MWLFHTLLCIASLALLAA) are cleaved as a signal peptide. Residues 19-1124 (FNVDVARPWL…VFLKDEKYHS (1106 aa)) lie on the Extracellular side of the membrane. 2 FG-GAP repeats span residues 22–79 (DVAR…EILC) and 80–138 (HPVE…PQAQ). A glycan (N-linked (GlcNAc...) asparagine) is linked at Asn49. 2 cysteine pairs are disulfide-bonded: Cys70–Cys79 and Cys126–Cys159. Residues 145–199 (ENLLDPDARVDTGDCYSNKEGGGEDDVNTARQRRALEKEEEEDKEEEEDEEEEEA) form an X-domain (extra domain) region. Residues 158–200 (DCYSNKEGGGEDDVNTARQRRALEKEEEEDKEEEEDEEEEEAG) are disordered. Over residues 182–200 (KEEEEDKEEEEDEEEEEAG) the composition is skewed to acidic residues. In terms of domain architecture, VWFA spans 200 to 389 (GTEIAIILDG…SKLRYNIISM (190 aa)). N-linked (GlcNAc...) asparagine glycosylation is found at Asn271 and Asn321. An FG-GAP 3 repeat occupies 390–442 (EGTVGDALHYQLAQIGFSAQILDERQVLLGAVGAFDWSGGALLYDTRSRRGRF). N-linked (GlcNAc...) asparagine glycosylation is present at Asn444. 4 FG-GAP repeats span residues 447-499 (AAAA…GREA), 500-560 (SFLP…DGSF), 563-627 (ARIL…GLSA), and 631-691 (QRIR…FTPS). Positions 522, 524, 526, 530, 586, 588, 590, 594, 654, 656, 658, and 662 each coordinate Ca(2+). Residues Cys706 and Cys762 are joined by a disulfide bond. 2 N-linked (GlcNAc...) asparagine glycosylation sites follow: Asn726 and Asn782. Cys823 and Cys829 are joined by a disulfide. A glycan (N-linked (GlcNAc...) asparagine) is linked at Asn857. An intrachain disulfide couples Cys893 to Cys907. Asn934 and Asn954 each carry an N-linked (GlcNAc...) asparagine glycan. Cystine bridges form between Cys1008–Cys1033 and Cys1041–Cys1057. Residues Asn1065 and Asn1096 are each glycosylated (N-linked (GlcNAc...) asparagine). Residues 1125–1147 (LPIIIKGSVGGLLVLIVILVILF) traverse the membrane as a helical segment. At 1148–1179 (KCGFFKRKYQQLNLESIRKAQLKSENLLEEEN) the chain is on the cytoplasmic side. Positions 1150–1154 (GFFKR) match the GFFKR motif motif.

Belongs to the integrin alpha chain family. Heterodimer of an alpha and a beta subunit. The alpha subunit is composed of a heavy and a light chains linked by a disulfide bond. Alpha-E associates with beta-7. In terms of tissue distribution, expressed on a subclass of T-lymphocytes known as intra-epithelial lymphocytes which are located between mucosal epithelial cells.

It localises to the membrane. Its function is as follows. Integrin alpha-E/beta-7 is a receptor for E-cadherin. It mediates adhesion of intra-epithelial T-lymphocytes to epithelial cell monolayers. The sequence is that of Integrin alpha-E (ITGAE) from Homo sapiens (Human).